The primary structure comprises 367 residues: dTDP-4-amino-4,6-dideoxy-D-glucose transaminase (367 aa).

Lys184 is subject to N6-(pyridoxal phosphate)lysine.

This sequence belongs to the DegT/DnrJ/EryC1 family. Requires pyridoxal 5'-phosphate as cofactor.

It catalyses the reaction dTDP-4-amino-4,6-dideoxy-D-glucose + 2-oxoglutarate = dTDP-4-dehydro-6-deoxy-alpha-D-glucose + L-glutamate. It functions in the pathway bacterial outer membrane biogenesis; lipopolysaccharide biosynthesis. Catalyzes the conversion of dTDP-4-dehydro-6-deoxy-D-glucose (dTDP-D-Glc4O) to dTDP-4-amino-4,6-dideoxy-D-glucose (dTDP-D-Qui4N). L-glutamine can also be used as amino donor. The polypeptide is dTDP-4-amino-4,6-dideoxy-D-glucose transaminase (vioA) (Shigella dysenteriae).